Reading from the N-terminus, the 448-residue chain is Inositol hexakisphosphate kinase 2 (448 aa).

Residues 229–231 and Asp242 each bind ATP; that span reads ENL. Residues 238 to 246, Lys244, and 258 to 265 contribute to the substrate site; these read PCVLDLKMG and KAANQIRK. Position 405 (Asp405) interacts with ATP. His408 serves as a coordination point for substrate.

This sequence belongs to the inositol phosphokinase (IPK) family. As to expression, highly expressed in brain and lung, and at slightly lower levels in liver, kidney and testis.

The protein resides in the nucleus. The catalysed reaction is 1D-myo-inositol hexakisphosphate + ATP = 5-diphospho-1D-myo-inositol 1,2,3,4,6-pentakisphosphate + ADP. The protein operates within phospholipid metabolism; phosphatidylinositol metabolism. Functionally, converts inositol hexakisphosphate (InsP6) to diphosphoinositol pentakisphosphate (InsP7/PP-InsP5). May play a role in the regulation of Na(+)-dependent phosphate cotransport, possibly via its role in diphosphoinositol pentakisphosphate (InsP7/PP-InsP5) biosynthesis. In Mus musculus (Mouse), this protein is Inositol hexakisphosphate kinase 2 (Ip6k2).